Here is a 193-residue protein sequence, read N- to C-terminus: MAAEQVEDNCISFVEMKFINNTLYFVAENDEDLESDHFGKLEPKLSIIRNLNDQVLFINQGNQPVFEDMPDSDCPDNAPQTIFIIYMYKDSLTRGLAVTISVQCKKMSTLSCENKIVSFKEMNPPDNIDNEGSDIIFFQRSVPGHDDKIQFESSLYKGYFLACKKENDLFKLILKKQDDNGDKSVTFTVQNQH.

Positions 1–36 are excised as a propeptide; that stretch reads MAAEQVEDNCISFVEMKFINNTLYFVAENDEDLESD.

Belongs to the IL-1 family. In terms of assembly, forms a ternary complex with ligand-binding receptor subunit IL18R1 and signaling receptor subunit IL18RAP at the plasma membrane. Mature IL18 first binds to IL18R1 forming a low affinity binary complex, which then interacts with IL18RAP to form a high affinity ternary complex that signals inside the cell. Interacts with cargo receptor TMED10; the interaction mediates the translocation from the cytoplasm into the ERGIC (endoplasmic reticulum-Golgi intermediate compartment) and thereby secretion. The pro-IL-18 precursor is processed by CASP1, CASP4 or CASP5 to yield its mature, active form. The pro-IL-18 precursor features autoinhibitory interactions between the propeptide and the post-cleavage-site region, preventing recognition by the IL18R1 receptor. Processing by CASP1, CASP4 or CASP5 induces conformational changes to generate critical receptor-binding sites. The mature form is then secreted and released in the extracellular milieu by passing through the gasdermin-D (GSDMD) pore. In contrast, cleavage by CASP3 inactivates IL18.

The protein resides in the cytoplasm. Its subcellular location is the cytosol. It is found in the secreted. Its function is as follows. Pro-inflammatory cytokine primarily involved in epithelial barrier repair, polarized T-helper 1 (Th1) cell and natural killer (NK) cell immune responses. Upon binding to IL18R1 and IL18RAP, forms a signaling ternary complex which activates NF-kappa-B, triggering synthesis of inflammatory mediators. Synergizes with IL12/interleukin-12 to induce IFNG synthesis from T-helper 1 (Th1) cells and natural killer (NK) cells. Involved in transduction of inflammation downstream of pyroptosis: its mature form is specifically released in the extracellular milieu by passing through the gasdermin-D (GSDMD) pore. The chain is Interleukin-18 (IL18) from Boselaphus tragocamelus (Nilgai).